We begin with the raw amino-acid sequence, 317 residues long: Aspartate carbamoyltransferase catalytic subunit (317 aa).

Positions 66 and 67 each coordinate carbamoyl phosphate. An L-aspartate-binding site is contributed by lysine 94. Carbamoyl phosphate-binding residues include arginine 116, histidine 144, and glutamine 147. 2 residues coordinate L-aspartate: arginine 177 and arginine 231. Positions 272 and 273 each coordinate carbamoyl phosphate.

Belongs to the aspartate/ornithine carbamoyltransferase superfamily. ATCase family. As to quaternary structure, heterododecamer (2C3:3R2) of six catalytic PyrB chains organized as two trimers (C3), and six regulatory PyrI chains organized as three dimers (R2).

The catalysed reaction is carbamoyl phosphate + L-aspartate = N-carbamoyl-L-aspartate + phosphate + H(+). Its pathway is pyrimidine metabolism; UMP biosynthesis via de novo pathway; (S)-dihydroorotate from bicarbonate: step 2/3. In terms of biological role, catalyzes the condensation of carbamoyl phosphate and aspartate to form carbamoyl aspartate and inorganic phosphate, the committed step in the de novo pyrimidine nucleotide biosynthesis pathway. This chain is Aspartate carbamoyltransferase catalytic subunit, found in Beijerinckia indica subsp. indica (strain ATCC 9039 / DSM 1715 / NCIMB 8712).